A 454-amino-acid polypeptide reads, in one-letter code: OTU domain-containing protein 1 (454 aa).

Disordered regions lie at residues 36 to 64 and 116 to 257; these read QSASPAAAAPEPDTGERPPAAATEPREAA and LPPP…SRAD. A compositionally biased stretch (low complexity) spans 52-64; the sequence is RPPAAATEPREAA. Positions 116–125 are enriched in pro residues; sequence LPPPSAPSPP. Composition is skewed to basic and acidic residues over residues 151-164, 193-210, and 219-229; these read DAPDRNFRLSEHRQ, GEERRAERSSRGWDRASG, and ALRRQDPEAEA. The OTU domain maps to 282 to 411; it reads KYRFHIIPDG…NGHYDAVFDH (130 aa). A cys-loop region spans residues 287-293; the sequence is IIPDGNC. Aspartate 290 is an active-site residue. Cysteine 293 functions as the Nucleophile in the catalytic mechanism. A his-loop region spans residues 342–352; it reads AAQDGAWAGYP. Residues 399–404 are variable-loop; the sequence is WLSNGH. Histidine 404 is an active-site residue. Residues 430–449 enclose the UIM domain; the sequence is KRDEELAKSMAISLSKMYIE.

It carries out the reaction Thiol-dependent hydrolysis of ester, thioester, amide, peptide and isopeptide bonds formed by the C-terminal Gly of ubiquitin (a 76-residue protein attached to proteins as an intracellular targeting signal).. Deubiquitinating enzyme that specifically hydrolyzes 'Lys-63'-linked polyubiquitin to monoubiquitin. Required for the stability and translation of a subset mRNAs with a high abundance of rare codons by mediating deubiquitination of 40S ribosomal protein RPS10/eS10, thereby antagonizing ZNF598-mediated 40S ubiquitination. The abundance of rare codons in mRNAs can limit the translation rate and can lead to ribosome collisions that trigger activation of ribosome quality control (RQC) pathway by ZNF598. OTUD1-mediated deubiquitination prevents activation of the RQC and subsequent dissociation of ribosomes and stimulates formation of polysomes and translation. The chain is OTU domain-containing protein 1 (Otud1) from Mus musculus (Mouse).